We begin with the raw amino-acid sequence, 297 residues long: Rhomboid-type serine protease 2 (297 aa).

Transmembrane regions (helical) follow at residues 14–34, 60–80, 98–118, 120–140, 155–175, and 179–199; these read IQHP…IFLL, ISFY…LVAL, IVLN…SIGF, PDEA…YWAI, LVVP…IVIP, and FIGH…YLDV. The Nucleophile role is filled by Ser-128. His-182 is a catalytic residue. Positions 268 to 297 are disordered; that stretch reads DLEAGTRSRGNSSVDPTTSFPGTGQTLGTQ. A compositionally biased stretch (polar residues) spans 275-297; that stretch reads SRGNSSVDPTTSFPGTGQTLGTQ.

Belongs to the peptidase S54 family.

Its subcellular location is the golgi apparatus membrane. The protein localises to the golgi apparatus. The protein resides in the cis-Golgi network membrane. It carries out the reaction Cleaves type-1 transmembrane domains using a catalytic dyad composed of serine and histidine that are contributed by different transmembrane domains.. Its function is as follows. Probable rhomboid-type serine protease that catalyzes intramembrane proteolysis. The sequence is that of Rhomboid-type serine protease 2 (RBD2) from Yarrowia lipolytica (strain CLIB 122 / E 150) (Yeast).